The primary structure comprises 442 residues: Probable D-serine dehydratase (442 aa).

Position 115 is an N6-(pyridoxal phosphate)lysine (K115).

It belongs to the serine/threonine dehydratase family. DsdA subfamily. It depends on pyridoxal 5'-phosphate as a cofactor.

The enzyme catalyses D-serine = pyruvate + NH4(+). The polypeptide is Probable D-serine dehydratase (Halalkalibacterium halodurans (strain ATCC BAA-125 / DSM 18197 / FERM 7344 / JCM 9153 / C-125) (Bacillus halodurans)).